The primary structure comprises 233 residues: Lipoprotein-releasing system ATP-binding protein LolD (233 aa).

In terms of domain architecture, ABC transporter spans 6 to 233 (LQCDNLCKRY…TAELSLMGAE (228 aa)). An ATP-binding site is contributed by 42–49 (GSSGSGKS).

This sequence belongs to the ABC transporter superfamily. Lipoprotein translocase (TC 3.A.1.125) family. As to quaternary structure, the complex is composed of two ATP-binding proteins (LolD) and two transmembrane proteins (LolC and LolE).

It localises to the cell inner membrane. Functionally, part of the ABC transporter complex LolCDE involved in the translocation of mature outer membrane-directed lipoproteins, from the inner membrane to the periplasmic chaperone, LolA. Responsible for the formation of the LolA-lipoprotein complex in an ATP-dependent manner. The sequence is that of Lipoprotein-releasing system ATP-binding protein LolD from Escherichia coli O6:K15:H31 (strain 536 / UPEC).